The following is a 335-amino-acid chain: Large ribosomal subunit protein uL10 (335 aa).

The tract at residues 300 to 335 (QVSEQAAEKKEEKKEEEKKGPSEEEIGGGLSSLFGG) is disordered. A compositionally biased stretch (basic and acidic residues) spans 305–321 (AAEKKEEKKEEEKKGPS). Positions 326–335 (GGGLSSLFGG) are enriched in gly residues.

The protein belongs to the universal ribosomal protein uL10 family. Part of the 50S ribosomal subunit. Forms part of the ribosomal stalk which helps the ribosome interact with GTP-bound translation factors. Forms a heptameric L10(L12)2(L12)2(L12)2 complex, where L10 forms an elongated spine to which the L12 dimers bind in a sequential fashion.

In terms of biological role, forms part of the ribosomal stalk, playing a central role in the interaction of the ribosome with GTP-bound translation factors. The polypeptide is Large ribosomal subunit protein uL10 (Sulfolobus acidocaldarius (strain ATCC 33909 / DSM 639 / JCM 8929 / NBRC 15157 / NCIMB 11770)).